The primary structure comprises 504 residues: MEEFQGYLELDKSRQHDFLYPLIFQEYIYALAHDHGLNRSILLENVGYDNKSSSLIVKRLITRMYQQNHLIISVNDSNQNPFLGHNKNLYSQMISEGFAVIVEIPFSLRSVSSLEGKEIVQSHNLRSIHSIFPFLEDKFLHLNYVSDILIPHPIHLEILVQTLRYWVKDASSLHLLRFFFYEYYNWNSLITPKKSISIFSKRNQRLFLFLYNSHVCEYESIFLFFRNQSSYLRSTSSGALLERIYFYGKIKHLVEVFVNDFQAILWLFKDPFMHYVRYQGKSILASKGTPLLMNKWKYYLVNFWQCHFYVWSQPGRIYINQLSNHSFDFLGYLSSVGLNPSVVRSQMLENSFIIDNAIKKFDIIVPIIPLIGSLAKAKFCNVLGHPISKPARADSSDSDIIDRFVRICRNLSHYHSGSSKKKSLYRIKYILRLSCARTLARKHKSTVRAFLKRLGSGLLEEFLTEEEQVLSLIFPKASSTSRRLYRGRIWYFDIISINDLANHE.

This sequence belongs to the intron maturase 2 family. MatK subfamily.

The protein localises to the plastid. It is found in the chloroplast. Usually encoded in the trnK tRNA gene intron. Probably assists in splicing its own and other chloroplast group II introns. The protein is Maturase K of Hamamelis japonica (Japanese witch hazel).